Consider the following 264-residue polypeptide: Interleukin-33 (264 aa).

The tract at residues 1–67 (MRPRMKYSNS…ETCYFGKEPA (67 aa)) is homeodomain-like HTH domain. A propeptide spanning residues 1–101 (MRPRMKYSNS…RSLLGSIQAF (101 aa)) is cleaved from the precursor. The tract at residues 66 to 108 (PAKRYSLKSGSKHEGRLSTCLPDSRKRSLLGSIQAFAASVDTL) is interaction with RELA.

Belongs to the IL-1 family. Highly divergent. In terms of assembly, forms a 1:1:1 heterotrimeric complex with its primary high-affinity receptor IL1RL1 and the coreceptor IL1RAP. Interacts with cargo receptor TMED10; the interaction mediates the translocation from the cytoplasm into the ERGIC (endoplasmic reticulum-Golgi intermediate compartment) and thereby secretion. In terms of processing, the full-length protein can be released from cells and is able to signal via the IL1RL1/ST2 receptor. However, proteolytic processing by CELA1, CSTG/cathepsin G and ELANE/neutrophil elastase produces C-terminal peptides that are more active than the unprocessed full-length protein. May also be proteolytically processed by calpains. Proteolytic cleavage mediated by apoptotic caspases including CASP3 and CASP7 results in IL33 inactivation. In vitro proteolytic cleavage by CASP1 was reported but could not be confirmed in vivo suggesting that IL33 is probably not a direct substrate for that caspase.

It localises to the nucleus. The protein resides in the chromosome. It is found in the cytoplasm. The protein localises to the cytoplasmic vesicle. Its subcellular location is the secretory vesicle. It localises to the secreted. Functionally, cytokine that binds to and signals through the IL1RL1/ST2 receptor which in turn activates NF-kappa-B and MAPK signaling pathways in target cells. Involved in the maturation of Th2 cells inducing the secretion of T-helper type 2-associated cytokines. Also involved in activation of mast cells, basophils, eosinophils and natural killer cells. Acts as a chemoattractant for Th2 cells, and may function as an 'alarmin', that amplifies immune responses during tissue injury. Induces rapid UCP2-dependent mitochondrial rewiring that attenuates the generation of reactive oxygen species and preserves the integrity of Krebs cycle required for persistent production of itaconate and subsequent GATA3-dependent differentiation of inflammation-resolving alternatively activated macrophages. In quiescent endothelia the uncleaved form is constitutively and abundantly expressed, and acts as a chromatin-associated nuclear factor with transcriptional repressor properties, it may sequester nuclear NF-kappaB/RELA, lowering expression of its targets. This form is rapidely lost upon angiogenic or pro-inflammatory activation. This Rattus norvegicus (Rat) protein is Interleukin-33.